The primary structure comprises 67 residues: Protein SlyX homolog (67 aa).

The segment covering 48 to 60 (TSAPSTAAESNPQ) has biased composition (polar residues). Residues 48-67 (TSAPSTAAESNPQHEIPPHY) are disordered.

It belongs to the SlyX family.

The polypeptide is Protein SlyX homolog (Cupriavidus pinatubonensis (strain JMP 134 / LMG 1197) (Cupriavidus necator (strain JMP 134))).